We begin with the raw amino-acid sequence, 400 residues long: Probable protein phosphatase 2C 64 (400 aa).

The PPM-type phosphatase domain occupies 47–355 (DFSMAVVQAN…DDITVIVVFF (309 aa)). Serine 75 carries the phosphoserine modification. Mn(2+) contacts are provided by aspartate 86, glycine 87, aspartate 287, and aspartate 346.

This sequence belongs to the PP2C family. As to quaternary structure, interacts with SAUR19. The cofactor is Mg(2+). Requires Mn(2+) as cofactor.

The enzyme catalyses O-phospho-L-seryl-[protein] + H2O = L-seryl-[protein] + phosphate. It catalyses the reaction O-phospho-L-threonyl-[protein] + H2O = L-threonyl-[protein] + phosphate. Dephosphorylates and represses plasma membrane H(+)-ATPases (PM H(+)-ATPases, e.g. AHA1 and AHA2), thus influencing negatively plant growth and fitness. The polypeptide is Probable protein phosphatase 2C 64 (Arabidopsis thaliana (Mouse-ear cress)).